The following is a 156-amino-acid chain: Ribosome maturation factor RimP (156 aa).

This sequence belongs to the RimP family.

The protein localises to the cytoplasm. Functionally, required for maturation of 30S ribosomal subunits. This chain is Ribosome maturation factor RimP, found in Oenococcus oeni (strain ATCC BAA-331 / PSU-1).